Reading from the N-terminus, the 209-residue chain is Putative amino acid efflux protein YcgF (209 aa).

The next 6 membrane-spanning stretches (helical) occupy residues 1–21, 39–59, 62–82, 110–130, 147–167, and 184–204; these read MNIFLSYIVLGLSLSAPVGPV, IFGLGAMTADGLYMLFIYFGL, FLTAPFVKTFLWLFGFFVLTY, FASGFLISLSNPLSILFWLGI, LLIYSSGIMIGILIWDFCMAI, and LTGIAGVSLLVFGFYFGYQGI.

Belongs to the Rht family.

Its subcellular location is the cell membrane. The polypeptide is Putative amino acid efflux protein YcgF (ycgF) (Bacillus subtilis (strain 168)).